Consider the following 672-residue polypeptide: DNA ligase (672 aa).

Residues 32 to 36 (DSEYD), 81 to 82 (SL), and glutamate 114 contribute to the NAD(+) site. Lysine 116 functions as the N6-AMP-lysine intermediate in the catalytic mechanism. Residues arginine 137, glutamate 174, lysine 291, and lysine 315 each coordinate NAD(+). Zn(2+) contacts are provided by cysteine 409, cysteine 412, cysteine 427, and cysteine 433. Residues 592–672 (VNENPFKEKT…EFLEIVNSFS (81 aa)) form the BRCT domain.

Belongs to the NAD-dependent DNA ligase family. LigA subfamily. It depends on Mg(2+) as a cofactor. The cofactor is Mn(2+).

It catalyses the reaction NAD(+) + (deoxyribonucleotide)n-3'-hydroxyl + 5'-phospho-(deoxyribonucleotide)m = (deoxyribonucleotide)n+m + AMP + beta-nicotinamide D-nucleotide.. Functionally, DNA ligase that catalyzes the formation of phosphodiester linkages between 5'-phosphoryl and 3'-hydroxyl groups in double-stranded DNA using NAD as a coenzyme and as the energy source for the reaction. It is essential for DNA replication and repair of damaged DNA. The chain is DNA ligase from Actinobacillus succinogenes (strain ATCC 55618 / DSM 22257 / CCUG 43843 / 130Z).